The sequence spans 418 residues: Tyrosine--tRNA ligase (418 aa).

Residue Tyr-34 participates in L-tyrosine binding. The 'HIGH' region signature appears at 39-48 (PTADSLHLGH). Residues Tyr-169 and Gln-173 each coordinate L-tyrosine. Residues 229–233 (KFGKS) carry the 'KMSKS' region motif. Lys-232 is an ATP binding site. Residues 352-418 (LNLVDMLVTA…GKKKYAVLTY (67 aa)) form the S4 RNA-binding domain.

The protein belongs to the class-I aminoacyl-tRNA synthetase family. TyrS type 1 subfamily. In terms of assembly, homodimer.

The protein localises to the cytoplasm. The catalysed reaction is tRNA(Tyr) + L-tyrosine + ATP = L-tyrosyl-tRNA(Tyr) + AMP + diphosphate + H(+). Catalyzes the attachment of tyrosine to tRNA(Tyr) in a two-step reaction: tyrosine is first activated by ATP to form Tyr-AMP and then transferred to the acceptor end of tRNA(Tyr). The sequence is that of Tyrosine--tRNA ligase from Streptococcus pyogenes serotype M5 (strain Manfredo).